The following is a 435-amino-acid chain: Protein GOLM2 (435 aa).

Residue Met-1 is modified to N-acetylmethionine. Residues 1-14 (MVGFGANRRAGRLP) lie on the Cytoplasmic side of the membrane. The helical; Signal-anchor for type II membrane protein transmembrane segment at 15–35 (SFVLVVLLVVIVVLAFNYWSI) threads the bilayer. A coiled-coil region spans residues 35-194 (ISSRHVLLQE…DQFLQEQKET (160 aa)). The Lumenal portion of the chain corresponds to 36-435 (SSRHVLLQEE…YGKQRFSDVL (400 aa)). Basic and acidic residues-rich tracts occupy residues 191-212 (QKET…DHGA) and 223-239 (DANK…PHGK). Disordered regions lie at residues 191–239 (QKET…PHGK) and 271–435 (PPVL…SDVL). Ser-232 is modified (phosphoserine). Composition is skewed to polar residues over residues 282 to 294 (QTIS…QPLS) and 302 to 320 (HLNQ…SNPL). Residues 343 to 361 (ATRDRANDFHKLKQSRFFD) are compositionally biased toward basic and acidic residues. Ser-365 carries the phosphoserine modification. Acidic residues predominate over residues 398 to 417 (YNEEEDGDGGEEDVQDDEER). The segment covering 425–435 (DYGKQRFSDVL) has biased composition (basic and acidic residues).

This sequence belongs to the GOLM family.

Its subcellular location is the membrane. The polypeptide is Protein GOLM2 (Mus musculus (Mouse)).